The chain runs to 1024 residues: Beta-galactosidase (1024 aa).

Positions 103 and 202 each coordinate substrate. Aspartate 202 lines the Na(+) pocket. Mg(2+)-binding residues include glutamate 417, histidine 419, and glutamate 462. Substrate contacts are provided by residues glutamate 462 and 538–541 (EYAH). Residue glutamate 462 is the Proton donor of the active site. The active-site Nucleophile is the glutamate 538. Asparagine 598 serves as a coordination point for Mg(2+). Residues phenylalanine 602 and asparagine 605 each contribute to the Na(+) site. 2 residues coordinate substrate: asparagine 605 and tryptophan 1000.

The protein belongs to the glycosyl hydrolase 2 family. Homotetramer. Requires Mg(2+) as cofactor. Na(+) is required as a cofactor.

It carries out the reaction Hydrolysis of terminal non-reducing beta-D-galactose residues in beta-D-galactosides.. The protein is Beta-galactosidase of Klebsiella pneumoniae.